Consider the following 360-residue polypeptide: Histidinol-phosphate aminotransferase (360 aa).

Lysine 222 is subject to N6-(pyridoxal phosphate)lysine.

The protein belongs to the class-II pyridoxal-phosphate-dependent aminotransferase family. Histidinol-phosphate aminotransferase subfamily. Homodimer. Pyridoxal 5'-phosphate is required as a cofactor.

The enzyme catalyses L-histidinol phosphate + 2-oxoglutarate = 3-(imidazol-4-yl)-2-oxopropyl phosphate + L-glutamate. It participates in amino-acid biosynthesis; L-histidine biosynthesis; L-histidine from 5-phospho-alpha-D-ribose 1-diphosphate: step 7/9. This Listeria innocua serovar 6a (strain ATCC BAA-680 / CLIP 11262) protein is Histidinol-phosphate aminotransferase.